Consider the following 429-residue polypeptide: Enolase (429 aa).

Position 163 (glutamine 163) interacts with (2R)-2-phosphoglycerate. Glutamate 205 functions as the Proton donor in the catalytic mechanism. Residues aspartate 242, glutamate 286, and aspartate 313 each coordinate Mg(2+). 4 residues coordinate (2R)-2-phosphoglycerate: lysine 338, arginine 367, serine 368, and lysine 389. The active-site Proton acceptor is the lysine 338.

It belongs to the enolase family. Mg(2+) serves as cofactor.

Its subcellular location is the cytoplasm. It localises to the secreted. The protein localises to the cell surface. The enzyme catalyses (2R)-2-phosphoglycerate = phosphoenolpyruvate + H2O. It functions in the pathway carbohydrate degradation; glycolysis; pyruvate from D-glyceraldehyde 3-phosphate: step 4/5. In terms of biological role, catalyzes the reversible conversion of 2-phosphoglycerate (2-PG) into phosphoenolpyruvate (PEP). It is essential for the degradation of carbohydrates via glycolysis. The sequence is that of Enolase from Thermoanaerobacter pseudethanolicus (strain ATCC 33223 / 39E) (Clostridium thermohydrosulfuricum).